The following is a 576-amino-acid chain: 5'-nucleotidase (576 aa).

The N-terminal stretch at 1–28 (MRPAAATAPKWLLLALSALLPLWPTAKS) is a signal peptide. Zn(2+) is bound by residues D38 and H40. The cysteines at positions 53 and 59 are disulfide-linked. The N-linked (GlcNAc...) asparagine glycan is linked to N55. Zn(2+) is bound by residues D87, N119, H222, and H245. 3 N-linked (GlcNAc...) asparagine glycosylation sites follow: N313, N335, and N349. Cystine bridges form between C355/C360 and C367/C389. R356 is a binding site for AMP. R356 serves as a coordination point for IMP. Residues N392 and R397 each contribute to the AMP site. Positions 392 and 397 each coordinate IMP. N405 carries N-linked (GlcNAc...) asparagine glycosylation. F419 lines the AMP pocket. Residue F419 participates in IMP binding. A disulfide bridge connects residues C478 and C481. AMP is bound by residues Y502 and D508. IMP-binding residues include Y502 and D508. S551 carries the GPI-anchor amidated serine lipid modification. Positions 552-576 (AASHYQGSFPLIILSFWAVILVLYQ) are cleaved as a propeptide — removed in mature form.

This sequence belongs to the 5'-nucleotidase family. In terms of assembly, homodimer. Zn(2+) is required as a cofactor. As to expression, expressed in the brain.

The protein localises to the cell membrane. The enzyme catalyses a ribonucleoside 5'-phosphate + H2O = a ribonucleoside + phosphate. The catalysed reaction is a 2'-deoxyribonucleoside 5'-phosphate + H2O = a 2'-deoxyribonucleoside + phosphate. It carries out the reaction dTMP + H2O = thymidine + phosphate. It catalyses the reaction CMP + H2O = cytidine + phosphate. The enzyme catalyses IMP + H2O = inosine + phosphate. The catalysed reaction is AMP + H2O = adenosine + phosphate. It carries out the reaction GMP + H2O = guanosine + phosphate. It catalyses the reaction UMP + H2O = uridine + phosphate. The enzyme catalyses dAMP + H2O = 2'-deoxyadenosine + phosphate. The catalysed reaction is dCMP + H2O = 2'-deoxycytidine + phosphate. Functionally, catalyzes the hydrolysis of nucleotide monophosphates, releasing inorganic phosphate and the corresponding nucleoside. AMP is the preferred substrate but can also hydrolyze CMP and GMP. Shows a preference for ribonucleotide monophosphates over their equivalent deoxyribose forms. Other substrates include IMP, UMP, dAMP, dCMP, dTMP, NAD and NMN. The protein is 5'-nucleotidase (Nt5e) of Rattus norvegicus (Rat).